The primary structure comprises 72 residues: Alpha-conotoxin SII (72 aa).

A signal peptide spans 1–21 (MGMRMMFTVFLLVVLATTVVS). The propeptide occupies 22–50 (FPSDRASDGRDDEAKDERSDMHESDRNGR). The interval 23 to 51 (PSDRASDGRDDEAKDERSDMHESDRNGRG) is disordered. Over residues 26 to 49 (RASDGRDDEAKDERSDMHESDRNG) the composition is skewed to basic and acidic residues. 3 disulfide bridges follow: C52-C68, C53-C58, and C54-C64. The propeptide occupies 70-72 (RTL).

The protein belongs to the conotoxin A superfamily. In terms of processing, the disulfide bond Cys-52-Cys-68 (Cys I-VI), which corresponds to an extra disulfide bond when compared to the cysteine framework I (CC-C-C), does contribute to conotoxin SII stability and imparts a unique binding mode at the nAChR. Expressed by the venom duct.

It is found in the secreted. In terms of biological role, alpha-conotoxins act on postsynaptic membranes, they bind to the nicotinic acetylcholine receptors (nAChR) and thus inhibit them. This toxin potently inhibits the rodent muscle nAChR (IC(50)=120 nM (adult subtype, alpha-1-beta-1-delta-epsilon/CHRNA1-CHRNB1-CHRND-CHRNE) and IC(50)=370 nM (fetal subtype, alpha-1-beta-1-gamma-delta/CHRNA1-CHRNB1-CHRNG-CHRND)) and weakly inhibits neuronal nAChRs. In contrast to alpha-conotoxins bearing 2 disulfide bonds (framework I), this conotoxin acts via a unique binding mode with the helix and the N- and C-termini buried in the binding pocket of muscle nAChRs. The sequence is that of Alpha-conotoxin SII from Conus striatus (Striated cone).